We begin with the raw amino-acid sequence, 754 residues long: Ribosomal RNA large subunit methyltransferase K/L (754 aa).

The region spanning 46-157 (TAYRLCLWSR…RGEAILSLDL (112 aa)) is the THUMP domain.

It belongs to the methyltransferase superfamily. RlmKL family.

The protein resides in the cytoplasm. It catalyses the reaction guanosine(2445) in 23S rRNA + S-adenosyl-L-methionine = N(2)-methylguanosine(2445) in 23S rRNA + S-adenosyl-L-homocysteine + H(+). The enzyme catalyses guanosine(2069) in 23S rRNA + S-adenosyl-L-methionine = N(2)-methylguanosine(2069) in 23S rRNA + S-adenosyl-L-homocysteine + H(+). Specifically methylates the guanine in position 2445 (m2G2445) and the guanine in position 2069 (m7G2069) of 23S rRNA. This chain is Ribosomal RNA large subunit methyltransferase K/L, found in Pseudomonas fluorescens (strain ATCC BAA-477 / NRRL B-23932 / Pf-5).